The primary structure comprises 480 residues: Adenosylhomocysteinase (480 aa).

Positions 63, 142, and 203 each coordinate substrate. Residue 204–206 (TTT) coordinates NAD(+). Lysine 233 and aspartate 237 together coordinate substrate. NAD(+)-binding positions include asparagine 238, 267-272 (GYGDVG), glutamate 290, asparagine 325, 346-348 (IGH), and asparagine 394.

This sequence belongs to the adenosylhomocysteinase family. The cofactor is NAD(+).

It localises to the cytoplasm. It catalyses the reaction S-adenosyl-L-homocysteine + H2O = L-homocysteine + adenosine. It participates in amino-acid biosynthesis; L-homocysteine biosynthesis; L-homocysteine from S-adenosyl-L-homocysteine: step 1/1. May play a key role in the regulation of the intracellular concentration of adenosylhomocysteine. The sequence is that of Adenosylhomocysteinase from Xylella fastidiosa (strain 9a5c).